A 609-amino-acid chain; its full sequence is Aminopeptidase ltah-1.1 (609 aa).

Residues 137-139 (QCQ) and 268-273 (PFGGME) each bind substrate. A Zn(2+)-binding site is contributed by histidine 297. The active-site Proton acceptor is glutamate 298. 2 residues coordinate Zn(2+): histidine 301 and glutamate 320. The active-site Proton donor is the tyrosine 387. 564-566 (RMK) provides a ligand contact to substrate.

Belongs to the peptidase M1 family. Zn(2+) is required as a cofactor.

It localises to the cytoplasm. It carries out the reaction Release of N-terminal Arg and Lys from oligopeptides when P1' is not Pro. Also acts on arylamides of Arg and Lys.. Its function is as follows. Aminopeptidase which preferentially removes N-terminal Arg and Lys residues from peptides and proteins. The sequence is that of Aminopeptidase ltah-1.1 from Caenorhabditis elegans.